Reading from the N-terminus, the 189-residue chain is Translation initiation factor IF-3 (189 aa).

The protein belongs to the IF-3 family. In terms of assembly, monomer.

It is found in the cytoplasm. Its function is as follows. IF-3 binds to the 30S ribosomal subunit and shifts the equilibrium between 70S ribosomes and their 50S and 30S subunits in favor of the free subunits, thus enhancing the availability of 30S subunits on which protein synthesis initiation begins. This is Translation initiation factor IF-3 from Corynebacterium glutamicum (strain ATCC 13032 / DSM 20300 / JCM 1318 / BCRC 11384 / CCUG 27702 / LMG 3730 / NBRC 12168 / NCIMB 10025 / NRRL B-2784 / 534).